The following is a 102-amino-acid chain: Putative pterin-4-alpha-carbinolamine dehydratase (102 aa).

Belongs to the pterin-4-alpha-carbinolamine dehydratase family.

It catalyses the reaction (4aS,6R)-4a-hydroxy-L-erythro-5,6,7,8-tetrahydrobiopterin = (6R)-L-erythro-6,7-dihydrobiopterin + H2O. This Burkholderia cenocepacia (strain HI2424) protein is Putative pterin-4-alpha-carbinolamine dehydratase.